The following is an 898-amino-acid chain: Dipeptidyl peptidase 8 (898 aa).

Catalysis depends on charge relay system residues S755, D833, and H865.

Belongs to the peptidase S9B family. DPPIV subfamily. In terms of assembly, homodimer. Forms a ternary complex with NLRP1, composed of a DPP8 homodimer, one full-length NLRP1 protein, and one cleaved C-terminus of NLRP1 (NACHT, LRR and PYD domains-containing protein 1, C-terminus). Forms a ternary complex with CARD8, composed of a DPP8 homodimer, one full-length NLRP1 protein, and one cleaved C-terminus of CARD8 (Caspase recruitment domain-containing protein 8, C-terminus). In the ternary complex, only one subunit of the DPP8 homodimer is bound to NLRP1 or CARD8. In terms of tissue distribution, ubiquitously expressed, with highest levels in testis, placenta, prostate, muscle and brain.

It localises to the cytoplasm. The enzyme catalyses Release of an N-terminal dipeptide, Xaa-Yaa-|-Zaa-, from a polypeptide, preferentially when Yaa is Pro, provided Zaa is neither Pro nor hydroxyproline.. Inhibited by zinc. Inhibited by the serine proteinase inhibitor 4-(2-aminoethyl)benzenesulphonyl fluoride (AEBSF), and by di-isopropylfluorophosphate. Specifically inhibited by isoindoline derivatives. Inhibited by Val-boroPro (Talabostat, PT-100), a non-selective inhibitor, which triggers pyroptosis in monocytes and macrophages. Its function is as follows. Dipeptidyl peptidase that cleaves off N-terminal dipeptides from proteins having a Pro or Ala residue at position 2. Acts as a key inhibitor of caspase-1-dependent monocyte and macrophage pyroptosis in resting cells by preventing activation of NLRP1 and CARD8. Sequesters the cleaved C-terminal part of NLRP1 and CARD8, which respectively constitute the active part of the NLRP1 and CARD8 inflammasomes, in a ternary complex, thereby preventing their oligomerization and activation. The dipeptidyl peptidase activity is required to suppress NLRP1 and CARD8; however, neither NLRP1 nor CARD8 are bona fide substrates of DPP8, suggesting the existence of substrate(s) required for NLRP1 and CARD8 inhibition. The protein is Dipeptidyl peptidase 8 of Homo sapiens (Human).